The following is a 357-amino-acid chain: 4-hydroxy-3-methylbut-2-en-1-yl diphosphate synthase (flavodoxin) (357 aa).

[4Fe-4S] cluster contacts are provided by Cys-264, Cys-267, Cys-299, and Glu-306.

It belongs to the IspG family. The cofactor is [4Fe-4S] cluster.

It catalyses the reaction (2E)-4-hydroxy-3-methylbut-2-enyl diphosphate + oxidized [flavodoxin] + H2O + 2 H(+) = 2-C-methyl-D-erythritol 2,4-cyclic diphosphate + reduced [flavodoxin]. It participates in isoprenoid biosynthesis; isopentenyl diphosphate biosynthesis via DXP pathway; isopentenyl diphosphate from 1-deoxy-D-xylulose 5-phosphate: step 5/6. Its function is as follows. Converts 2C-methyl-D-erythritol 2,4-cyclodiphosphate (ME-2,4cPP) into 1-hydroxy-2-methyl-2-(E)-butenyl 4-diphosphate. The chain is 4-hydroxy-3-methylbut-2-en-1-yl diphosphate synthase (flavodoxin) from Campylobacter jejuni subsp. jejuni serotype O:6 (strain 81116 / NCTC 11828).